We begin with the raw amino-acid sequence, 524 residues long: Lysophospholipid acyltransferase LPCAT4 (524 aa).

2 consecutive transmembrane segments (helical) span residues 40–62 (CLLGVLLAPIRVLLAFIVLFLLW) and 87–107 (TVCHNGVLGLSRLLFFLLGFL). The HXXXXD motif motif lies at 129–134 (HSTFFD). The N-linked (GlcNAc...) asparagine glycan is linked to Asn152. Residues 490 to 524 (PHKPRSTSQIPNASSPSSPTALANGTVQAPKQKGD) form a disordered region. Polar residues predominate over residues 495-518 (STSQIPNASSPSSPTALANGTVQA).

The protein belongs to the 1-acyl-sn-glycerol-3-phosphate acyltransferase family. In terms of tissue distribution, widely expressed with much higher level in brain. Expressed in erythroleukemic cells but not in reticulocytes.

Its subcellular location is the endoplasmic reticulum membrane. The enzyme catalyses a 1-acyl-sn-glycero-3-phosphoethanolamine + an acyl-CoA = a 1,2-diacyl-sn-glycero-3-phosphoethanolamine + CoA. The catalysed reaction is a 1-O-(1Z-alkenyl)-sn-glycero-3-phosphoethanolamine + an acyl-CoA = a 1-O-(1Z-alkenyl)-2-acyl-sn-glycero-3-phosphoethanolamine + CoA. It catalyses the reaction a 1-acyl-sn-glycero-3-phosphocholine + an acyl-CoA = a 1,2-diacyl-sn-glycero-3-phosphocholine + CoA. It carries out the reaction a 1-O-alkyl-sn-glycero-3-phosphocholine + acetyl-CoA = a 1-O-alkyl-2-acetyl-sn-glycero-3-phosphocholine + CoA. The enzyme catalyses a 1-acyl-sn-glycero-3-phospho-L-serine + an acyl-CoA = a 1,2-diacyl-sn-glycero-3-phospho-L-serine + CoA. The catalysed reaction is octanoyl-CoA + a 1-acyl-sn-glycero-3-phosphoethanolamine = 1-acyl-2-octanoyl-sn-glycero-3-phosphoethanolamine + CoA. It catalyses the reaction a 1-acyl-sn-glycero-3-phosphoethanolamine + hexadecanoyl-CoA = 1-acyl-2-hexadecanoyl-sn-glycero-3-phosphoethanolamine + CoA. It carries out the reaction a 1-acyl-sn-glycero-3-phosphoethanolamine + octadecanoyl-CoA = 1-acyl-2-octadecanoyl-sn-glycero-3-phosphoethanolamine + CoA. The enzyme catalyses a 1-acyl-sn-glycero-3-phosphoethanolamine + (9Z)-octadecenoyl-CoA = 1-acyl-2-(9Z)-octadecenoyl-sn-glycero-3-phosphoethanolamine + CoA. The catalysed reaction is a 1-acyl-sn-glycero-3-phosphoethanolamine + (5Z,8Z,11Z,14Z)-eicosatetraenoyl-CoA = 1-acyl-2-(5Z,8Z,11Z,14Z)-eicosatetraenoyl-sn-glycero-3-phosphoethanolamine + CoA. It catalyses the reaction a 1-O-(1Z-alkenyl)-sn-glycero-3-phosphoethanolamine + octanoyl-CoA = 1-O-(1Z)-alkenyl-2-octanoyl-sn-glycero-3-phosphoethanolamine + CoA. It carries out the reaction a 1-O-(1Z-alkenyl)-sn-glycero-3-phosphoethanolamine + hexadecanoyl-CoA = 1-O-(1Z)-alkenyl-2-hexadecanoyl-sn-glycero-3-phosphoethanolamine + CoA. The enzyme catalyses a 1-O-(1Z-alkenyl)-sn-glycero-3-phosphoethanolamine + octadecanoyl-CoA = 1-O-(1Z)-alkenyl-2-octadecanoyl-sn-glycero-3-phosphoethanolamine + CoA. The catalysed reaction is a 1-O-(1Z-alkenyl)-sn-glycero-3-phosphoethanolamine + (9Z)-octadecenoyl-CoA = 1-O-(1Z)-alkenyl-2-(9Z)-octadecenoyl-sn-glycero-3-phosphoethanolamine + CoA. It catalyses the reaction a 1-O-(1Z-alkenyl)-sn-glycero-3-phosphoethanolamine + (5Z,8Z,11Z,14Z)-eicosatetraenoyl-CoA = 1-O-(1Z)-alkenyl-2-(5Z,8Z,11Z,14Z)-eicosatetraenoyl-sn-glycero-3-phosphoethanolamine + CoA. It carries out the reaction a 1-acyl-sn-glycero-3-phosphocholine + hexadecanoyl-CoA = 1-acyl-2-hexadecanoyl-sn-glycero-3-phosphocholine + CoA. The enzyme catalyses a 1-acyl-sn-glycero-3-phosphocholine + (9Z)-octadecenoyl-CoA = a 1-acyl-2-(9Z)-octadecenoyl-sn-glycero-3-phosphocholine + CoA. The catalysed reaction is 1-O-hexadecyl-sn-glycero-3-phosphocholine + (9Z)-octadecenoyl-CoA = 1-O-hexadecyl-2-(9Z)-octadecenoyl-sn-glycero-3-phosphocholine + CoA. It catalyses the reaction 1-O-hexadecyl-sn-glycero-3-phosphocholine + (5Z,8Z,11Z,14Z)-eicosatetraenoyl-CoA = 1-O-hexadecyl-2-(5Z,8Z,11Z,14Z)-eicosatetraenoyl-sn-glycero-3-phosphocholine + CoA. It carries out the reaction 1-hexadecanoyl-sn-glycero-3-phospho-L-serine + (9Z)-octadecenoyl-CoA = 1-hexadecanoyl-2-(9Z-octadecenoyl)-sn-glycero-3-phospho-L-serine + CoA. The enzyme catalyses 1-octadecanoyl-sn-glycero-3-phospho-(1'-sn-glycerol) + (9Z)-octadecenoyl-CoA = 1-octadecanoyl-2-(9Z-octadecenoyl)-sn-glycero-3-phospho-(1'-sn-glycerol) + CoA. The catalysed reaction is 1-octadecanoyl-sn-glycero-3-phospho-(1'-sn-glycerol) + (5Z,8Z,11Z,14Z)-eicosatetraenoyl-CoA = 1-octadecanoyl-2-(5Z,8Z,11Z,14Z-eicosatetraenoyl)-sn-glycero-3-phospho-(1'-sn-glycerol) + CoA. The protein operates within lipid metabolism; phospholipid metabolism. In terms of biological role, displays acyl-CoA-dependent lysophospholipid acyltransferase activity with a subset of lysophospholipids as substrates; converts lysophosphatidylethanolamine to phosphatidylethanolamine, 1-alkenyl-lysophatidylethanolamine to 1-alkenyl-phosphatidylethanolamine, lysophosphatidylglycerol and alkyl-lysophosphatidylcholine to phosphatidylglycerol and alkyl-phosphatidylcholine, respectively. In contrast, has no lysophosphatidylinositol, glycerol-3-phosphate, diacylglycerol or lysophosphatidic acid acyltransferase activity. Prefers long chain acyl-CoAs (C16, C18) as acyl donors. Converts lysophosphatidylcholine to phosphatidycholine. This chain is Lysophospholipid acyltransferase LPCAT4 (Lpcat4), found in Mus musculus (Mouse).